Here is a 223-residue protein sequence, read N- to C-terminus: MLIIGLCVVSMLLLSSNTFYLSGGVLGGSLVVNWFYPVLGKFGSILIGFVLALIGFIFCSGTSLIRLIVTFYHWLTMKNEQSENAEQEKSTEELEQIVIVKSDRSETENLDQNYLNVEQNSEIETVKPSLEAENISIGKSSSHLINISGLNPEVSIKSEYELANEENEKPQFSFGFDSESLPSVNLSSDSDEQRVSKNDFVAVWNKPVKTVVQEDLAIKSKCG.

Helical transmembrane passes span 1–21 and 45–65; these read MLII…TFYL and ILIG…TSLI.

Its subcellular location is the cell membrane. This is an uncharacterized protein from Haemophilus influenzae (strain ATCC 51907 / DSM 11121 / KW20 / Rd).